Consider the following 424-residue polypeptide: N-succinylarginine dihydrolase (424 aa).

Substrate contacts are provided by residues 19 to 28, Asn110, and 137 to 138; these read AGLSRGNVAS and HR. The active site involves Glu174. Residue Arg206 participates in substrate binding. The active site involves His242. Substrate-binding residues include Asp244 and Asn351. Cys357 functions as the Nucleophile in the catalytic mechanism.

It belongs to the succinylarginine dihydrolase family. Homodimer.

The catalysed reaction is N(2)-succinyl-L-arginine + 2 H2O + 2 H(+) = N(2)-succinyl-L-ornithine + 2 NH4(+) + CO2. The protein operates within amino-acid degradation; L-arginine degradation via AST pathway; L-glutamate and succinate from L-arginine: step 2/5. Its function is as follows. Catalyzes the hydrolysis of N(2)-succinylarginine into N(2)-succinylornithine, ammonia and CO(2). In Zymomonas mobilis subsp. mobilis (strain ATCC 31821 / ZM4 / CP4), this protein is N-succinylarginine dihydrolase.